A 221-amino-acid polypeptide reads, in one-letter code: Ribonuclease HII (221 aa).

The RNase H type-2 domain occupies 29–220 (RRVAGVDEVG…LRDLQAGEIG (192 aa)). A divalent metal cation is bound by residues Asp-35, Glu-36, and Asp-129. Residues 198-221 (LGPSPQHRRSFAPLRDLQAGEIGG) form a disordered region.

This sequence belongs to the RNase HII family. Mn(2+) serves as cofactor. Mg(2+) is required as a cofactor.

It localises to the cytoplasm. The catalysed reaction is Endonucleolytic cleavage to 5'-phosphomonoester.. Endonuclease that specifically degrades the RNA of RNA-DNA hybrids. This chain is Ribonuclease HII, found in Synechococcus sp. (strain JA-3-3Ab) (Cyanobacteria bacterium Yellowstone A-Prime).